Reading from the N-terminus, the 300-residue chain is Ribonuclease HIII (300 aa).

The RNase H type-2 domain maps to 86-300 (RSRIGVDESG…FNEVLGSGNQ (215 aa)). 3 residues coordinate a divalent metal cation: D92, E93, and D196.

This sequence belongs to the RNase HII family. RnhC subfamily. Mn(2+) serves as cofactor. It depends on Mg(2+) as a cofactor.

The protein localises to the cytoplasm. The enzyme catalyses Endonucleolytic cleavage to 5'-phosphomonoester.. Its function is as follows. Endonuclease that specifically degrades the RNA of RNA-DNA hybrids. In Chlamydia trachomatis serovar L2 (strain ATCC VR-902B / DSM 19102 / 434/Bu), this protein is Ribonuclease HIII.